A 200-amino-acid chain; its full sequence is dITP/XTP pyrophosphatase (200 aa).

8–13 contacts substrate; it reads SQNSSK. Glu40 and Asp69 together coordinate Mg(2+). Asp69 serves as the catalytic Proton acceptor. Residues Ser70, 154–157, Lys177, and 182–183 contribute to the substrate site; these read FGYD and HR.

This sequence belongs to the HAM1 NTPase family. Homodimer. It depends on Mg(2+) as a cofactor.

It carries out the reaction XTP + H2O = XMP + diphosphate + H(+). The enzyme catalyses dITP + H2O = dIMP + diphosphate + H(+). The catalysed reaction is ITP + H2O = IMP + diphosphate + H(+). In terms of biological role, pyrophosphatase that catalyzes the hydrolysis of nucleoside triphosphates to their monophosphate derivatives, with a high preference for the non-canonical purine nucleotides XTP (xanthosine triphosphate), dITP (deoxyinosine triphosphate) and ITP. Seems to function as a house-cleaning enzyme that removes non-canonical purine nucleotides from the nucleotide pool, thus preventing their incorporation into DNA/RNA and avoiding chromosomal lesions. This chain is dITP/XTP pyrophosphatase, found in Coxiella burnetii (strain RSA 493 / Nine Mile phase I).